The sequence spans 346 residues: UDP-3-O-acylglucosamine N-acyltransferase (346 aa).

The active-site Proton acceptor is the H253.

This sequence belongs to the transferase hexapeptide repeat family. LpxD subfamily. Homotrimer.

It catalyses the reaction a UDP-3-O-[(3R)-3-hydroxyacyl]-alpha-D-glucosamine + a (3R)-hydroxyacyl-[ACP] = a UDP-2-N,3-O-bis[(3R)-3-hydroxyacyl]-alpha-D-glucosamine + holo-[ACP] + H(+). The protein operates within bacterial outer membrane biogenesis; LPS lipid A biosynthesis. Catalyzes the N-acylation of UDP-3-O-acylglucosamine using 3-hydroxyacyl-ACP as the acyl donor. Is involved in the biosynthesis of lipid A, a phosphorylated glycolipid that anchors the lipopolysaccharide to the outer membrane of the cell. The sequence is that of UDP-3-O-acylglucosamine N-acyltransferase from Rickettsia peacockii (strain Rustic).